The chain runs to 601 residues: Elongation factor 4 (601 aa).

The tr-type G domain maps to 6 to 188; the sequence is QCIRNFSIIA…AVVAKVPPPQ (183 aa). Residues 18–23 and 135–138 contribute to the GTP site; these read DHGKST and NKID.

It belongs to the TRAFAC class translation factor GTPase superfamily. Classic translation factor GTPase family. LepA subfamily.

The protein localises to the cell membrane. The enzyme catalyses GTP + H2O = GDP + phosphate + H(+). In terms of biological role, required for accurate and efficient protein synthesis under certain stress conditions. May act as a fidelity factor of the translation reaction, by catalyzing a one-codon backward translocation of tRNAs on improperly translocated ribosomes. Back-translocation proceeds from a post-translocation (POST) complex to a pre-translocation (PRE) complex, thus giving elongation factor G a second chance to translocate the tRNAs correctly. Binds to ribosomes in a GTP-dependent manner. The chain is Elongation factor 4 from Desulfitobacterium hafniense (strain DSM 10664 / DCB-2).